Reading from the N-terminus, the 240-residue chain is Guanylate kinase (240 aa).

Residues 56–236 (GRIFVITGPS…TLNELKSILL (181 aa)) form the Guanylate kinase-like domain. 63–70 (GPSGVGKS) is an ATP binding site.

Belongs to the guanylate kinase family.

The protein resides in the cytoplasm. It carries out the reaction GMP + ATP = GDP + ADP. Its function is as follows. Essential for recycling GMP and indirectly, cGMP. In Mycoplasma genitalium (strain ATCC 33530 / DSM 19775 / NCTC 10195 / G37) (Mycoplasmoides genitalium), this protein is Guanylate kinase (gmk).